The chain runs to 174 residues: Ribosome maturation factor RimM (174 aa).

A PRC barrel domain is found at 101–174; the sequence is AGEFYLADLC…IELLQRWILE (74 aa).

It belongs to the RimM family. In terms of assembly, binds ribosomal protein uS19.

It is found in the cytoplasm. In terms of biological role, an accessory protein needed during the final step in the assembly of 30S ribosomal subunit, possibly for assembly of the head region. Essential for efficient processing of 16S rRNA. May be needed both before and after RbfA during the maturation of 16S rRNA. It has affinity for free ribosomal 30S subunits but not for 70S ribosomes. This is Ribosome maturation factor RimM from Treponema pallidum (strain Nichols).